A 334-amino-acid polypeptide reads, in one-letter code: Ribosomal lysine N-methyltransferase 5 (334 aa).

S-adenosyl-L-methionine is bound by residues Trp-88, 155–157 (GAG), Asp-177, Trp-227, and Met-254.

Belongs to the class I-like SAM-binding methyltransferase superfamily. RKM5 family.

Its function is as follows. S-adenosyl-L-methionine-dependent protein-lysine N-methyltransferase that methylates 60S ribosomal protein L1. This chain is Ribosomal lysine N-methyltransferase 5 (RKM5), found in Lachancea thermotolerans (strain ATCC 56472 / CBS 6340 / NRRL Y-8284) (Yeast).